The primary structure comprises 483 residues: Bifunctional pantoate ligase/cytidylate kinase (483 aa).

The segment at 1–246 (MPTMGALHAG…CGSTRLIDHA (246 aa)) is pantoate--beta-alanine ligase. 4-11 (MGALHAGH) lines the ATP pocket. Histidine 11 functions as the Proton donor in the catalytic mechanism. Glutamine 34 contributes to the (R)-pantoate binding site. Glutamine 34 provides a ligand contact to beta-alanine. ATP is bound at residue 124–127 (GEKD). Glutamine 130 is a (R)-pantoate binding site. Residues valine 153 and 161–164 (LSSR) each bind ATP. Residues 247 to 483 (FLMTRQPLVA…AEEAWPTPQR (237 aa)) are cytidylate kinase.

The protein in the N-terminal section; belongs to the pantothenate synthetase family. It in the C-terminal section; belongs to the cytidylate kinase family. Type 1 subfamily.

The protein resides in the cytoplasm. The enzyme catalyses (R)-pantoate + beta-alanine + ATP = (R)-pantothenate + AMP + diphosphate + H(+). The catalysed reaction is CMP + ATP = CDP + ADP. It carries out the reaction dCMP + ATP = dCDP + ADP. The protein operates within cofactor biosynthesis; (R)-pantothenate biosynthesis; (R)-pantothenate from (R)-pantoate and beta-alanine: step 1/1. Functionally, catalyzes the condensation of pantoate with beta-alanine in an ATP-dependent reaction via a pantoyl-adenylate intermediate. Its function is as follows. Catalyzes the transfer of a phosphate group from ATP to either CMP or dCMP to form CDP or dCDP and ADP, respectively. This is Bifunctional pantoate ligase/cytidylate kinase from Synechococcus sp. (strain CC9902).